Reading from the N-terminus, the 203-residue chain is 2-hydroxychromene-2-carboxylate isomerase (203 aa).

Ser11 functions as the Nucleophile in the catalytic mechanism. Ser11 is a glutathione binding site. Substrate contacts are provided by residues Lys43, 53–54 (NR), and Tyr84. Residues Val168 and 179-182 (WGND) each bind glutathione.

It belongs to the GST superfamily. NadH family. The cofactor is glutathione.

The enzyme catalyses 2-hydroxychromene-2-carboxylate = (3E)-4-(2-hydroxyphenyl)-2-oxobut-3-enoate. It functions in the pathway aromatic compound metabolism; naphthalene degradation. Involved in the naphthalene catabolic pathway. Catalyzes the reversible glutathione-dependent isomerization of 2-hydroxychromene-2-carboxylate (HCCA) to trans-O-hydroxybenzylidenepyruvate (THBPA). The protein is 2-hydroxychromene-2-carboxylate isomerase (nahD) of Pseudomonas putida (Arthrobacter siderocapsulatus).